Reading from the N-terminus, the 138-residue chain is ATP synthase epsilon chain (138 aa).

This sequence belongs to the ATPase epsilon chain family. In terms of assembly, F-type ATPases have 2 components, CF(1) - the catalytic core - and CF(0) - the membrane proton channel. CF(1) has five subunits: alpha(3), beta(3), gamma(1), delta(1), epsilon(1). CF(0) has three main subunits: a, b and c.

Its subcellular location is the cellular thylakoid membrane. Its function is as follows. Produces ATP from ADP in the presence of a proton gradient across the membrane. The chain is ATP synthase epsilon chain from Microcystis aeruginosa (strain NIES-843 / IAM M-2473).